Reading from the N-terminus, the 154-residue chain is PHA granule-associated protein PhaP (154 aa).

It localises to the cytoplasmic granule. Functionally, polyhydroxyalkanoate (PHA) granule structural protein. Important for PHA granule formation and separation, and for cell growth. In Haloferax mediterranei (strain ATCC 33500 / DSM 1411 / JCM 8866 / NBRC 14739 / NCIMB 2177 / R-4) (Halobacterium mediterranei), this protein is PHA granule-associated protein PhaP (phaP).